The chain runs to 444 residues: Xaa-Pro dipeptidase (444 aa).

The Mn(2+) site is built by D247, D258, H340, E385, and E424.

This sequence belongs to the peptidase M24B family. Bacterial-type prolidase subfamily. Mn(2+) is required as a cofactor.

The enzyme catalyses Xaa-L-Pro dipeptide + H2O = an L-alpha-amino acid + L-proline. In terms of biological role, splits dipeptides with a prolyl residue in the C-terminal position. This Proteus mirabilis (strain HI4320) protein is Xaa-Pro dipeptidase.